A 721-amino-acid chain; its full sequence is MDGKVGSTTTGCPVIHGGMTSTGTSNTAWWPNALNLDILHQHDTKTNPMEKDFNYREEVKKLDFEALKKDLHALMTDSQAWWPADWGHYGGLMIRMSWHAAGSYRVADGRGGAGTGNQRFAPLNSWPDNVNLDKARRLLWPIKKKYGNKISWADLIVLAGTIAYESMGLKTFGFGFGREDIWHPEKDVYWGSEQEWLGAKRYDGKSRESLENPLAAVQMGLIYVNPEGVNGQPDPLRTAQDVRVTFGRMAMNDEETVALTAGGHTVGKCHGNGNAKLLGPNPEAANVEDQGLGWINKTTRGIGRNTVSSGIEGAWTTHPTQWDNGYFYLLLNYDWELKKSPAGAWQWEPIHIKEEDKPVDVEDPAIRHNPIMTDADMAMKMDPVYRKIAERFYQDPDYFAEVFARAWFKLTHRDMGPKTRYIGPDVPKEDLIWQDPVPAGNRAYDIAAAKAKIAASNLTIGEMVSTAWDSARTFRGSDKRGGANGARIRLKPQKDWEGNEPQRLTKVLQILEDIATDTGASVADVIILAGNVGIEKAAKAAGFDIIVPFAPGRGDATDDMTDAESFDVLEPLHDGYRNWLKKTYDVRPEELMLDRTQLMGLTAHEMTVLVGGLRVLGTNHNNTQYGVFTDRVGALTNDFFVNLTDMANVWIPSKDNLYEIRDRKAGNIKWTATRVDLVFGSNSILRSYAEVYAQDDNKGKFIQDFVAAWTKVMNADRFDLA.

The segment at residues 98–223 (WHAAGSYRVA…LAAVQMGLIY (126 aa)) is a cross-link (tryptophyl-tyrosyl-methioninium (Trp-Tyr) (with M-249)). Histidine 99 (proton acceptor) is an active-site residue. The tryptophyl-tyrosyl-methioninium (Tyr-Met) (with W-98) cross-link spans 223–249 (YVNPEGVNGQPDPLRTAQDVRVTFGRM). Histidine 264 contacts heme b.

It belongs to the peroxidase family. Peroxidase/catalase subfamily. As to quaternary structure, homodimer or homotetramer. Heme b is required as a cofactor. Formation of the three residue Trp-Tyr-Met cross-link is important for the catalase, but not the peroxidase activity of the enzyme.

The enzyme catalyses H2O2 + AH2 = A + 2 H2O. The catalysed reaction is 2 H2O2 = O2 + 2 H2O. Its function is as follows. Bifunctional enzyme with both catalase and broad-spectrum peroxidase activity. In Legionella pneumophila subsp. pneumophila (strain Philadelphia 1 / ATCC 33152 / DSM 7513), this protein is Catalase-peroxidase 1.